The sequence spans 293 residues: NAD kinase (293 aa).

The Proton acceptor role is filled by Asp-73. NAD(+)-binding positions include 73-74 (DG), 147-148 (NE), Arg-175, Asp-177, and 188-193 (TAYSMS).

Belongs to the NAD kinase family. A divalent metal cation is required as a cofactor.

It localises to the cytoplasm. It catalyses the reaction NAD(+) + ATP = ADP + NADP(+) + H(+). Involved in the regulation of the intracellular balance of NAD and NADP, and is a key enzyme in the biosynthesis of NADP. Catalyzes specifically the phosphorylation on 2'-hydroxyl of the adenosine moiety of NAD to yield NADP. The polypeptide is NAD kinase (Colwellia psychrerythraea (strain 34H / ATCC BAA-681) (Vibrio psychroerythus)).